We begin with the raw amino-acid sequence, 344 residues long: GTPase Obg (344 aa).

The region spanning 1 to 159 is the Obg domain; that stretch reads MKFLDLAKVY…RTIWLRLKLI (159 aa). Residues 160-326 enclose the OBG-type G domain; sequence ADVGLLGLPN…VLRVLRARVD (167 aa). Residues 166-173, 191-195, 212-215, 279-282, and 307-309 contribute to the GTP site; these read GLPNAGKS, FTTLV, DIPG, NKID, and SGV. Residues serine 173 and threonine 193 each coordinate Mg(2+).

The protein belongs to the TRAFAC class OBG-HflX-like GTPase superfamily. OBG GTPase family. As to quaternary structure, monomer. The cofactor is Mg(2+).

The protein resides in the cytoplasm. Functionally, an essential GTPase which binds GTP, GDP and possibly (p)ppGpp with moderate affinity, with high nucleotide exchange rates and a fairly low GTP hydrolysis rate. Plays a role in control of the cell cycle, stress response, ribosome biogenesis and in those bacteria that undergo differentiation, in morphogenesis control. In Jannaschia sp. (strain CCS1), this protein is GTPase Obg.